The sequence spans 610 residues: UvrABC system protein C (610 aa).

Residues 16–94 enclose the GIY-YIG domain; the sequence is SQPGVYRMYD…IKLYQPRYNV (79 aa). Positions 204-239 constitute a UVR domain; it reads DQVLTQLISRMETASQNLEFEEAARIRDQIQAVRRV.

The protein belongs to the UvrC family. Interacts with UvrB in an incision complex.

The protein resides in the cytoplasm. The UvrABC repair system catalyzes the recognition and processing of DNA lesions. UvrC both incises the 5' and 3' sides of the lesion. The N-terminal half is responsible for the 3' incision and the C-terminal half is responsible for the 5' incision. The chain is UvrABC system protein C from Escherichia coli (strain SMS-3-5 / SECEC).